Consider the following 102-residue polypeptide: Envelope glycoprotein N (102 aa).

The signal sequence occupies residues 1-32 (MGKVLRKPFAKAVPLLFLAATWLLTGVLPAGA). Residues 33 to 69 (SSPTNAAAASLTEAQDQFYSYTCNADTFSPSLTSFAS) lie on the Virion surface side of the membrane. Residues 70 to 90 (IWALLTLVLVIIASAIYLMYV) form a helical membrane-spanning segment. Over 91 to 102 (CFNKFVNTLLTD) the chain is Intravirion.

It belongs to the herpesviridae glycoprotein N family. In terms of assembly, interacts (via N-terminus) with gM (via N-terminus). The gM-gN heterodimer forms the gCII complex. O-glycosylated. Contains alpha 2,6-sialic acid residues.

It localises to the virion membrane. The protein localises to the host membrane. Its subcellular location is the host Golgi apparatus. The protein resides in the host trans-Golgi network. Its function is as follows. Envelope glycoprotein necessary for proper maturation of gM and modulation of its membrane fusion activity. Also plays a critical role in virion morphogenesis. The protein is Envelope glycoprotein N of Epstein-Barr virus (strain AG876) (HHV-4).